The following is a 252-amino-acid chain: ELH type 2 (252 aa).

The N-terminal stretch at alanine 1–serine 19 is a signal peptide. Propeptides lie at residues alanine 20–glutamate 75, proline 92–leucine 130, and alanine 144–alanine 185. The segment covering alanine 145–histidine 161 has biased composition (basic and acidic residues). The interval alanine 145–proline 171 is disordered. Residue lysine 222 is modified to Lysine amide.

This sequence belongs to the molluscan ELH family. As to expression, bag cell neurons.

The protein localises to the secreted. Its function is as follows. ELH acts as a neurotransmitter locally, upon neurons of the abdominal ganglion and as a hormone by diffusing into the circulating hemolymph and modulating the activity of other organs. It specifically causes contraction of smooth muscle in the ovotestis and expulsion of the egg string. Functionally, alpha-BCP decreases the activity of a cluster of neurons in the left upper quadrant of the abdominal ganglion. In terms of biological role, beta-BCP specifically excites 2 neurons, L1 and R1, in the abdominal ganglion. The chain is ELH type 2 (ELH2) from Aplysia parvula (Dwarf sea hare).